The primary structure comprises 245 residues: Hydrolase pyvD (245 aa).

Residues Cys-133, Asp-179, and His-211 contribute to the active site.

It belongs to the dienelactone hydrolase family.

It functions in the pathway secondary metabolite biosynthesis. Hydrolase; part of the gene cluster that mediates the biosynthesis of pyranoviolin A, a pyranonigrin analog with a C-3 methoxy group. Initially, the PKS portion of pyvA synthesizes C-10 carbon chain from 5 molecules of malonyl-CoA, which is then condensed with the thiolation (T) domain-bound glycine activated by the adenylation (A) domain. The subsequent chain release by Dieckmann condensation (DKC) could be catalyzed by the TE domain present at the C-terminus of pyvA and/or the alpha/beta hydrolase pyvD, installing the tetramic acid moiety. The FAD-dependent monooxygenase pyvC next epoxidizes one of the olefins of the polyketide part, and the epoxide ring-opening induces the dihydro-gamma-pyrone ring formation. The cytochrome P450 monooxygeanse pyvB would be responsible for the 2 consecutive reactions, in which the dihydro-gamma-pyrone is oxidized to gamma-pyrone and C-7 is hydroxylated to yield pyranonigrin F. Finally, the O-methyltransferase pyvH methylates the C-3 hydroxy group to complete the biosynthesis. In Aspergillus violaceofuscus (strain CBS 115571), this protein is Hydrolase pyvD.